We begin with the raw amino-acid sequence, 907 residues long: Clathrin coat assembly protein AP180 (907 aa).

The ENTH domain maps to 14–145; it reads QYSVTGSAVA…FSYRQMAFDF (132 aa). Disordered stretches follow at residues 285-326, 342-380, 393-414, and 505-525; these read LEGK…DTSP, TSKP…TAWG, SVPS…PTTT, and VPVV…APSP. A phosphoserine mark is found at serine 296, serine 300, and serine 306. Residues 302-324 show a composition bias toward polar residues; it reads LSKSSPATTVTSPNSTPAKTIDT. O-linked (GlcNAc) threonine glycosylation occurs at threonine 310. Serine 313 bears the Phosphoserine mark. Phosphothreonine is present on threonine 317. A compositionally biased stretch (low complexity) spans 505–515; that stretch reads VPVVTPTASTA. The span at 516–525 shows a compositional bias: pro residues; it reads PPVPATAPSP. 5 positions are modified to phosphoserine: serine 596, serine 602, serine 623, serine 629, and serine 763. At arginine 865 the chain carries Asymmetric dimethylarginine; alternate. An Omega-N-methylarginine; alternate modification is found at arginine 865. The segment at 867–907 is disordered; sequence PFGAAAVPGTQLSPSPTPASQSPKKPPAKDPLADLNIKDFL. Basic and acidic residues predominate over residues 893 to 907; sequence PAKDPLADLNIKDFL.

Belongs to the PICALM/SNAP91 family. Binds AP2A2. Interacts with AP2B1; clathrin competes with SNAP91. In terms of processing, thr-310 can be modified by the addition of N-acetylglucosamine which can be further phosphorylated. There is no evidence for direct Thr-310 phosphorylation.

Its subcellular location is the cell membrane. The protein resides in the membrane. The protein localises to the coated pit. In terms of biological role, adaptins are components of the adapter complexes which link clathrin to receptors in coated vesicles. Clathrin-associated protein complexes are believed to interact with the cytoplasmic tails of membrane proteins, leading to their selection and concentration. Binding of AP180 to clathrin triskelia induces their assembly into 60-70 nm coats. The sequence is that of Clathrin coat assembly protein AP180 (SNAP91) from Homo sapiens (Human).